The following is a 230-amino-acid chain: Protein CbbY (230 aa).

Aspartate 8 (nucleophile) is an active-site residue. Mg(2+) is bound by residues aspartate 8 and aspartate 10. Aspartate 8 contacts substrate. Catalysis depends on aspartate 10, which acts as the Proton donor. Residues glutamate 17, 50–54 (GGKER), 75–78 (HRAK), and 115–121 (TTTSLPN) each bind substrate. Residue aspartate 176 coordinates Mg(2+).

The protein belongs to the HAD-like hydrolase superfamily. CbbY/CbbZ/Gph/YieH family. Mg(2+) is required as a cofactor.

It catalyses the reaction D-xylulose 1,5-bisphosphate + H2O = D-xylulose 5-phosphate + phosphate. Functionally, highly selective xylulose-1,5-bisphosphate (XuBP) phosphatase. Also shows activity towards ribulose-1,5-bisphosphate (RuBP) and fructose-1,6-bisphosphate (FBP), but not towards fructose-6-phosphate (F6P) or ribulose-5-phosphate (Ru5P). Degrades xylulose-1,5-bisphosphate, a potent inhibitor of rubisco produced by the rubisco itself. This is Protein CbbY from Cereibacter sphaeroides (Rhodobacter sphaeroides).